A 1755-amino-acid chain; its full sequence is Transposon Ty1-ER1 Gag-Pol polyprotein (1755 aa).

Polar residues-rich tracts occupy residues 1–23 (MESQ…SVTS), 48–60 (TKAN…TPAS), and 127–152 (QSQF…GNTF). 3 disordered regions span residues 1-93 (MESQ…MMTQ), 126-174 (PQSQ…PPPM), and 352-421 (GSRN…SKST). Residues 153–165 (TDSSSADSDMTST) show a composition bias toward low complexity. Positions 299-401 (NNGIHINNKV…NSKSKTARAH (103 aa)) are RNA-binding. Residues 402–418 (NVSTSNNSPSTDNDSIS) show a composition bias toward low complexity. At S416 the chain carries Phosphoserine. D461 acts as the For protease activity; shared with dimeric partner in catalysis. An integrase-type zinc finger-like region spans residues 583 to 640 (NVHTSESTRKYPYPFIHRMLAHANAQTIRYSLKNNTITYFNESDVDWSSAIDYQCPDC). The Integrase catalytic domain maps to 660-835 (NSYEPFQYLH…AGLDISTLLP (176 aa)). 2 residues coordinate Mg(2+): D671 and D736. Disordered regions lie at residues 956–1087 (SKAV…ETEK), 1092–1111 (RSPS…NIVP), and 1130–1171 (DLPL…DSNA). The segment covering 960-969 (SPTDSTPPST) has biased composition (low complexity). A compositionally biased stretch (polar residues) spans 1005–1015 (STPQISNIEST). The span at 1038–1053 (ESSHASKSKDFRHSDS) shows a compositional bias: basic and acidic residues. 2 stretches are compositionally biased toward polar residues: residues 1054–1082 (YSEN…QISD) and 1101–1111 (PENNSSHNIVP). The Bipartite nuclear localization signal signature appears at 1178–1212 (KKRSLEDNETEIKVSRDTWNTKNMRSLEPPRSKKR). Residues 1338 to 1476 (NNYYITQLDI…DILGLEIKYQ (139 aa)) enclose the Reverse transcriptase Ty1/copia-type domain. 6 residues coordinate Mg(2+): D1346, D1427, D1428, D1610, E1652, and D1685. Residues 1610–1752 (DASYGNQPYY…IKTFKLLTNK (143 aa)) enclose the RNase H Ty1/copia-type domain.

The capsid protein forms a homotrimer, from which the VLPs are assembled. The protease is a homodimer, whose active site consists of two apposed aspartic acid residues. In terms of processing, initially, virus-like particles (VLPs) are composed of the structural unprocessed proteins Gag and Gag-Pol, and also contain the host initiator methionine tRNA (tRNA(i)-Met) which serves as a primer for minus-strand DNA synthesis, and a dimer of genomic Ty RNA. Processing of the polyproteins occurs within the particle and proceeds by an ordered pathway, called maturation. First, the protease (PR) is released by autocatalytic cleavage of the Gag-Pol polyprotein yielding capsid protein p45 and a Pol-p154 precursor protein. This cleavage is a prerequisite for subsequent processing of Pol-p154 at the remaining sites to release the mature structural and catalytic proteins. Maturation takes place prior to the RT reaction and is required to produce transposition-competent VLPs.

It is found in the cytoplasm. It localises to the nucleus. It catalyses the reaction DNA(n) + a 2'-deoxyribonucleoside 5'-triphosphate = DNA(n+1) + diphosphate. The catalysed reaction is Endonucleolytic cleavage to 5'-phosphomonoester.. Capsid protein (CA) is the structural component of the virus-like particle (VLP), forming the shell that encapsulates the retrotransposons dimeric RNA genome. The particles are assembled from trimer-clustered units and there are holes in the capsid shells that allow for the diffusion of macromolecules. CA also has nucleocapsid-like chaperone activity, promoting primer tRNA(i)-Met annealing to the multipartite primer-binding site (PBS), dimerization of Ty1 RNA and initiation of reverse transcription. In terms of biological role, the aspartyl protease (PR) mediates the proteolytic cleavages of the Gag and Gag-Pol polyproteins after assembly of the VLP. Its function is as follows. Reverse transcriptase/ribonuclease H (RT) is a multifunctional enzyme that catalyzes the conversion of the retro-elements RNA genome into dsDNA within the VLP. The enzyme displays a DNA polymerase activity that can copy either DNA or RNA templates, and a ribonuclease H (RNase H) activity that cleaves the RNA strand of RNA-DNA heteroduplexes during plus-strand synthesis and hydrolyzes RNA primers. The conversion leads to a linear dsDNA copy of the retrotransposon that includes long terminal repeats (LTRs) at both ends. Functionally, integrase (IN) targets the VLP to the nucleus, where a subparticle preintegration complex (PIC) containing at least integrase and the newly synthesized dsDNA copy of the retrotransposon must transit the nuclear membrane. Once in the nucleus, integrase performs the integration of the dsDNA into the host genome. This chain is Transposon Ty1-ER1 Gag-Pol polyprotein (TY1B-ER1), found in Saccharomyces cerevisiae (strain ATCC 204508 / S288c) (Baker's yeast).